Consider the following 222-residue polypeptide: UPF0173 metal-dependent hydrolase Mboo_0816 (222 aa).

Belongs to the UPF0173 family.

This is UPF0173 metal-dependent hydrolase Mboo_0816 from Methanoregula boonei (strain DSM 21154 / JCM 14090 / 6A8).